The chain runs to 75 residues: Small ribosomal subunit protein bS16 (75 aa).

This sequence belongs to the bacterial ribosomal protein bS16 family.

The polypeptide is Small ribosomal subunit protein bS16 (Campylobacter lari (strain RM2100 / D67 / ATCC BAA-1060)).